The primary structure comprises 235 residues: Transmembrane emp24 domain-containing protein 9 (235 aa).

The first 37 residues, 1–37 (MAVELGVLLVRPRPGTGLGRVMRTLLLVLWLATRGSA), serve as a signal peptide directing secretion. Residues 38–202 (LYFHIGETEK…RQTSESTNQR (165 aa)) are Lumenal-facing. Positions 47–145 (KKCFIEEIPD…MLRVHLDIQV (99 aa)) constitute a GOLD domain. The segment at 121 to 160 (CLHSNSTKFSLFAGGMLRVHLDIQVGEHANDYAEIAAKDK) is required for interaction with STX17. Asn-125 is a glycosylation site (N-linked (GlcNAc...) asparagine). Positions 154-184 (EIAAKDKLSELQLRVRQLVEQVEQIQKEQNY) form a coiled coil. N6-acetyllysine is present on Lys-160. A helical transmembrane segment spans residues 203–222 (VLWWSILQTLILVAIGVWQM). The Cytoplasmic segment spans residues 223-235 (RHLKSFFEAKKLV). A COPII vesicle coat-binding motif is present at residues 228–229 (FF). Residues 228-235 (FFEAKKLV) carry the COPI vesicle coat-binding motif.

It belongs to the EMP24/GP25L family. In terms of assembly, monomer and homodimer in endoplasmic reticulum. Predominantly monomeric and to lesser extent homodimeric in endoplasmic reticulum-Golgi intermediate compartment and cis-Golgi network. Probably oligomerizes with other members of the EMP24/GP25L family such as TMED2, TMED7 and TMED10. Interacts with TMED5. Interacts (via C-terminus) with COPG1; the interaction involves dimeric TMED9. Interacts with PTPN2 and SPAST. Interacts with STX17; the interaction is direct. In terms of processing, N-linked glycosylated containing high mannose.

The protein resides in the endoplasmic reticulum membrane. It localises to the golgi apparatus. The protein localises to the cis-Golgi network membrane. It is found in the endoplasmic reticulum-Golgi intermediate compartment membrane. Its subcellular location is the trans-Golgi network membrane. In terms of biological role, appears to be involved in vesicular protein trafficking, mainly in the early secretory pathway. In COPI vesicle-mediated retrograde transport involved in the coatomer recruitment to membranes of the early secretory pathway. Increases coatomer-dependent activity of ARFGAP2. Thought to play a crucial role in the specific retention of p24 complexes in cis-Golgi membranes; specifically contributes to the coupled localization of TMED2 and TMED10 in the cis-Golgi network. May be involved in organization of intracellular membranes, such as of the ER-Golgi intermediate compartment and the Golgi apparatus. Involved in ER localization of PTPN2 isoform PTPB. The protein is Transmembrane emp24 domain-containing protein 9 (TMED9) of Homo sapiens (Human).